Here is a 295-residue protein sequence, read N- to C-terminus: 4-hydroxy-tetrahydrodipicolinate synthase (295 aa).

Thr-45 contacts pyruvate. Residue Tyr-131 is the Proton donor/acceptor of the active site. Lys-159 (schiff-base intermediate with substrate) is an active-site residue. Val-202 is a pyruvate binding site.

This sequence belongs to the DapA family. Homotetramer; dimer of dimers.

Its subcellular location is the cytoplasm. It catalyses the reaction L-aspartate 4-semialdehyde + pyruvate = (2S,4S)-4-hydroxy-2,3,4,5-tetrahydrodipicolinate + H2O + H(+). It functions in the pathway amino-acid biosynthesis; L-lysine biosynthesis via DAP pathway; (S)-tetrahydrodipicolinate from L-aspartate: step 3/4. Catalyzes the condensation of (S)-aspartate-beta-semialdehyde [(S)-ASA] and pyruvate to 4-hydroxy-tetrahydrodipicolinate (HTPA). This is 4-hydroxy-tetrahydrodipicolinate synthase from Methanothrix thermoacetophila (strain DSM 6194 / JCM 14653 / NBRC 101360 / PT) (Methanosaeta thermophila).